Reading from the N-terminus, the 400-residue chain is ATP phosphoribosyltransferase regulatory subunit (400 aa).

This sequence belongs to the class-II aminoacyl-tRNA synthetase family. HisZ subfamily. As to quaternary structure, heteromultimer composed of HisG and HisZ subunits.

The protein resides in the cytoplasm. It functions in the pathway amino-acid biosynthesis; L-histidine biosynthesis; L-histidine from 5-phospho-alpha-D-ribose 1-diphosphate: step 1/9. In terms of biological role, required for the first step of histidine biosynthesis. May allow the feedback regulation of ATP phosphoribosyltransferase activity by histidine. In Hahella chejuensis (strain KCTC 2396), this protein is ATP phosphoribosyltransferase regulatory subunit.